The sequence spans 514 residues: 2-isopropylmalate synthase (514 aa).

The region spanning 5-267 is the Pyruvate carboxyltransferase domain; the sequence is IYIFDTTLRD…HTDIVTEEIT (263 aa). Residues aspartate 14, histidine 202, histidine 204, and asparagine 238 each contribute to the Mn(2+) site. The segment at 392–514 is regulatory domain; it reads KLKYYQVFTG…SKDLQKISAN (123 aa).

This sequence belongs to the alpha-IPM synthase/homocitrate synthase family. LeuA type 1 subfamily. Homodimer. Mn(2+) serves as cofactor.

The protein localises to the cytoplasm. The enzyme catalyses 3-methyl-2-oxobutanoate + acetyl-CoA + H2O = (2S)-2-isopropylmalate + CoA + H(+). It functions in the pathway amino-acid biosynthesis; L-leucine biosynthesis; L-leucine from 3-methyl-2-oxobutanoate: step 1/4. Its function is as follows. Catalyzes the condensation of the acetyl group of acetyl-CoA with 3-methyl-2-oxobutanoate (2-ketoisovalerate) to form 3-carboxy-3-hydroxy-4-methylpentanoate (2-isopropylmalate). In Clostridium kluyveri (strain NBRC 12016), this protein is 2-isopropylmalate synthase.